We begin with the raw amino-acid sequence, 968 residues long: Protein translocase subunit SecA (968 aa).

ATP contacts are provided by residues glutamine 86, 104 to 108 (GEGKT), and aspartate 494. Residues 835–968 (PAESAEESTD…RAAKAAKKRR (134 aa)) are disordered. Low complexity-rich tracts occupy residues 883–892 (ARVATRPAAE) and 910–923 (SAPS…FSEG). A compositionally biased stretch (basic residues) spans 956-968 (ARRRAAKAAKKRR).

This sequence belongs to the SecA family. In terms of assembly, monomer and homodimer. Part of the essential Sec protein translocation apparatus which comprises SecA, SecYEG and auxiliary proteins SecDF. Other proteins may also be involved.

Its subcellular location is the cell membrane. The protein localises to the cytoplasm. It carries out the reaction ATP + H2O + cellular proteinSide 1 = ADP + phosphate + cellular proteinSide 2.. Its function is as follows. Part of the Sec protein translocase complex. Interacts with the SecYEG preprotein conducting channel. Has a central role in coupling the hydrolysis of ATP to the transfer of proteins into and across the cell membrane, serving as an ATP-driven molecular motor driving the stepwise translocation of polypeptide chains across the membrane. The sequence is that of Protein translocase subunit SecA from Beutenbergia cavernae (strain ATCC BAA-8 / DSM 12333 / CCUG 43141 / JCM 11478 / NBRC 16432 / NCIMB 13614 / HKI 0122).